The sequence spans 249 residues: Probable transcriptional regulatory protein Wbm0670 (249 aa).

The protein belongs to the TACO1 family.

The protein localises to the cytoplasm. The protein is Probable transcriptional regulatory protein Wbm0670 of Wolbachia sp. subsp. Brugia malayi (strain TRS).